The following is a 1616-amino-acid chain: Replicase large subunit (1616 aa).

The segment at 50-458 (FSKVVSEEQT…QSLSMTFFLH (409 aa)) is methyltransferase. Residues 72–281 (TFYNTQNAVH…HSYSNILKYV (210 aa)) enclose the Alphavirus-like MT domain. Residues 801–963 (VVYSDMAKLR…KLEVDEVETR (163 aa)) enclose the (+)RNA virus helicase ATP-binding domain. Positions 830 to 1085 (LVDGVPGCGK…RHTKSLKYYT (256 aa)) are helicase. An ATP-binding site is contributed by 833-840 (GVPGCGKT). The 153-residue stretch at 964–1116 (RTTLRCPADV…DMYKVDAGTQ (153 aa)) folds into the (+)RNA virus helicase C-terminal domain. Residues 1380-1493 (MDVLELDVSK…YFPKGCEYPD (114 aa)) enclose the RdRp catalytic domain.

It belongs to the ssRNA positive-strand viruses RNA-directed RNA polymerase family. In terms of assembly, heterodimer of a large and a small subunit.

It catalyses the reaction RNA(n) + a ribonucleoside 5'-triphosphate = RNA(n+1) + diphosphate. The catalysed reaction is ATP + H2O = ADP + phosphate + H(+). Is an RNA-dependent RNA polymerase active in viral RNA replication. In terms of biological role, is a methyltransferase active in RNA capping and an RNA helicase. Methyltransferase displays a cytoplasmic capping enzyme activity. This function is necessary since all viral RNAs are synthesized in the cytoplasm, and host capping enzymes are restricted to the nucleus. Helicase region probably exhibits NTPase and RNA unwinding activities (Potential). It also acts as a suppressor of RNA-mediated gene silencing, also known as post-transcriptional gene silencing (PTGS), a mechanism of plant viral defense that limits the accumulation of viral RNAs. May mediate silencing suppression through either inhibition of HEN1-mediated siRNA or siRNA demethylation. In Antirrhinum majus (Garden snapdragon), this protein is Replicase large subunit.